The sequence spans 616 residues: uncharacterized protein (616 aa).

2 disordered regions span residues 166-243 and 272-298; these read SRTY…TPEL and DHEE…IEEI. Residues 184–200 are compositionally biased toward basic and acidic residues; it reads RVDESRPSENSSRHDYV. Residues 221-237 are compositionally biased toward polar residues; the sequence is TRTSNVTQTQPPTNQVF. Residues 272–287 show a composition bias toward acidic residues; sequence DHEEEEGQDDDEETEI. In terms of domain architecture, Ubiquitin-like spans 343–417; it reads ILIKLKFMND…VHCHISTTPY (75 aa).

This is an uncharacterized protein from Caenorhabditis elegans.